Consider the following 221-residue polypeptide: Small ribosomal subunit protein uS3c (221 aa).

A KH type-2 domain is found at 39–109 (LRDYLKTRLA…RVIVHVVEIA (71 aa)).

The protein belongs to the universal ribosomal protein uS3 family. Part of the 30S ribosomal subunit.

It localises to the plastid. It is found in the chloroplast. This chain is Small ribosomal subunit protein uS3c (rps3), found in Nephroselmis olivacea (Green alga).